Consider the following 807-residue polypeptide: Probable dimethyl sulfoxide reductase chain YnfF (807 aa).

Positions 1–45 (MKIHTTEALMKAEISRRSLMKTSALGSLALASSAFTLPFSQMVRA) form a signal peptide, tat-type signal. A 4Fe-4S Mo/W bis-MGD-type domain is found at 52 to 113 (EKAVWSSCTV…SIRRRMNHPD (62 aa)). [4Fe-4S] cluster contacts are provided by Cys-59, Cys-63, Cys-67, and Cys-99. Ser-195 contacts Mo-bis(molybdopterin guanine dinucleotide).

Belongs to the prokaryotic molybdopterin-containing oxidoreductase family. In terms of assembly, the complex consists of three subunits: YnfF, the reductase; YnfG, an electron transfer protein, and YnfH, a membrane anchor protein. Requires [4Fe-4S] cluster as cofactor. Mo-bis(molybdopterin guanine dinucleotide) is required as a cofactor. Post-translationally, exported by the Tat system. The position of the signal peptide cleavage has not been experimentally proven. Can also be exported by the Sec system.

It localises to the cell membrane. Functionally, terminal reductase during anaerobic growth on various sulfoxide and N-oxide compounds. The chain is Probable dimethyl sulfoxide reductase chain YnfF (ynfF) from Escherichia coli (strain K12).